The sequence spans 282 residues: Aspergillopepsin-2 (282 aa).

Residues 1 to 18 (MKFSTILTGSLFATAALA) form the signal peptide. 2 consecutive propeptides follow at residues 19 to 59 (APLT…GTTN) and 99 to 109 (GGGYGYWKNKR). The segment covering 27–39 (ARKEARAAGKRHS) has biased composition (basic residues). The interval 27-46 (ARKEARAAGKRHSNPPYIPG) is disordered. Position 110 is a pyrrolidone carboxylic acid (Gln110). Cystine bridges form between Cys115/Cys139 and Cys127/Cys210.

It belongs to the peptidase G1 family. In terms of assembly, heterodimer of two noncovalently bound light and heavy chains.

It carries out the reaction Preferential cleavage in B chain of insulin: 3-Asn-|-Gln-4, 13-Gly-|-Ala-14, and 26-Tyr-|-Thr-27.. This Aspergillus niger protein is Aspergillopepsin-2.